Reading from the N-terminus, the 280-residue chain is uncharacterized protein (280 aa).

To E.coli YgfZ (UP14) and B.aphidicola (subsp. Acyrthosiphon pisum) BU435.

This is an uncharacterized protein from Haemophilus influenzae (strain ATCC 51907 / DSM 11121 / KW20 / Rd).